A 152-amino-acid chain; its full sequence is CMT1A duplicated region transcript 4 protein (152 aa).

Residues 1 to 11 (MDARRMKKEEG) show a composition bias toward basic and acidic residues. 2 disordered regions span residues 1-23 (MDAR…RKLL) and 60-89 (ERPW…GKAV). The span at 65 to 74 (SRQNKPSSVI) shows a compositional bias: polar residues.

In terms of tissue distribution, expressed in fetal skeletal muscle and kidney.

This Homo sapiens (Human) protein is CMT1A duplicated region transcript 4 protein (CDRT4).